Here is a 307-residue protein sequence, read N- to C-terminus: D-alanine--D-alanine ligase (307 aa).

Residues 101 to 301 (RDVLAAAGVP…FGELVRWMVD (201 aa)) form the ATP-grasp domain. An ATP-binding site is contributed by 128–182 (LPPPYVIKPLGEGSSFGVFIVREDQAYPPQELTRSDWAFGNRVLVESYIGGRELT). The Mg(2+) site is built by aspartate 251, glutamate 268, and asparagine 270.

The protein belongs to the D-alanine--D-alanine ligase family. It depends on Mg(2+) as a cofactor. Mn(2+) is required as a cofactor.

Its subcellular location is the cytoplasm. It catalyses the reaction 2 D-alanine + ATP = D-alanyl-D-alanine + ADP + phosphate + H(+). The protein operates within cell wall biogenesis; peptidoglycan biosynthesis. Functionally, cell wall formation. The chain is D-alanine--D-alanine ligase from Beijerinckia indica subsp. indica (strain ATCC 9039 / DSM 1715 / NCIMB 8712).